The chain runs to 483 residues: FAD-linked oxidoreductase easE (483 aa).

Residues 10 to 193 (QGRLPFYSAV…TEATVRVFSD (184 aa)) enclose the FAD-binding PCMH-type domain.

The protein belongs to the oxygen-dependent FAD-linked oxidoreductase family. FAD is required as a cofactor.

The protein operates within alkaloid biosynthesis; ergot alkaloid biosynthesis. FAD-linked oxidoreductase; part of the gene cluster that mediates the biosynthesis of fungal ergot alkaloid. DmaW catalyzes the first step of ergot alkaloid biosynthesis by condensing dimethylallyl diphosphate (DMAP) and tryptophan to form 4-dimethylallyl-L-tryptophan. The second step is catalyzed by the methyltransferase easF that methylates 4-dimethylallyl-L-tryptophan in the presence of S-adenosyl-L-methionine, resulting in the formation of 4-dimethylallyl-L-abrine. The catalase easC and the FAD-dependent oxidoreductase easE then transform 4-dimethylallyl-L-abrine to chanoclavine-I which is further oxidized by easD in the presence of NAD(+), resulting in the formation of chanoclavine-I aldehyde. Agroclavine dehydrogenase easG then mediates the conversion of chanoclavine-I aldehyde to agroclavine via a non-enzymatic adduct reaction: the substrate is an iminium intermediate that is formed spontaneously from chanoclavine-I aldehyde in the presence of glutathione. The presence of easA is not required to complete this reaction. Further conversion of agroclavine to paspalic acid is a two-step process involving oxidation of agroclavine to elymoclavine and of elymoclavine to paspalic acid, the second step being performed by the elymoclavine oxidase cloA. Paspalic acid is then further converted to D-lysergic acid. Ergopeptines are assembled from D-lysergic acid and three different amino acids by the D-lysergyl-peptide-synthetases composed each of a monomudular and a trimodular nonribosomal peptide synthetase subunit. LpsB and lpsC encode the monomodular subunits responsible for D-lysergic acid activation and incorporation into the ergopeptine backbone. LpsA1 and A2 subunits encode the trimodular nonribosomal peptide synthetase assembling the tripeptide portion of ergopeptines. LpsA1 is responsible for formation of the major ergopeptine, ergotamine, and lpsA2 for alpha-ergocryptine, the minor ergopeptine of the total alkaloid mixture elaborated by C.purpurea. D-lysergyl-tripeptides are assembled by the nonribosomal peptide synthetases and released as N-(D-lysergyl-aminoacyl)-lactams. Cyclolization of the D-lysergyl-tripeptides is performed by the Fe(2+)/2-ketoglutarate-dependent dioxygenase easH which introduces a hydroxyl group into N-(D-lysergyl-aminoacyl)-lactam at alpha-C of the aminoacyl residue followed by spontaneous condensation with the terminal lactam carbonyl group. This is FAD-linked oxidoreductase easE from Claviceps purpurea (strain 20.1) (Ergot fungus).